The following is a 196-amino-acid chain: ATP-dependent Clp protease proteolytic subunit (196 aa).

Ser-98 (nucleophile) is an active-site residue. His-123 is an active-site residue.

Belongs to the peptidase S14 family. Fourteen ClpP subunits assemble into 2 heptameric rings which stack back to back to give a disk-like structure with a central cavity, resembling the structure of eukaryotic proteasomes.

It is found in the cytoplasm. It catalyses the reaction Hydrolysis of proteins to small peptides in the presence of ATP and magnesium. alpha-casein is the usual test substrate. In the absence of ATP, only oligopeptides shorter than five residues are hydrolyzed (such as succinyl-Leu-Tyr-|-NHMec, and Leu-Tyr-Leu-|-Tyr-Trp, in which cleavage of the -Tyr-|-Leu- and -Tyr-|-Trp bonds also occurs).. Its function is as follows. Cleaves peptides in various proteins in a process that requires ATP hydrolysis. Has a chymotrypsin-like activity. Plays a major role in the degradation of misfolded proteins. The protein is ATP-dependent Clp protease proteolytic subunit of Limosilactobacillus fermentum (strain NBRC 3956 / LMG 18251) (Lactobacillus fermentum).